The primary structure comprises 368 residues: Alanine racemase (368 aa).

Catalysis depends on Lys40, which acts as the Proton acceptor; specific for D-alanine. Lys40 carries the N6-(pyridoxal phosphate)lysine modification. Arg134 provides a ligand contact to substrate. Tyr263 acts as the Proton acceptor; specific for L-alanine in catalysis. Met310 is a binding site for substrate.

This sequence belongs to the alanine racemase family. The cofactor is pyridoxal 5'-phosphate.

It carries out the reaction L-alanine = D-alanine. It functions in the pathway amino-acid biosynthesis; D-alanine biosynthesis; D-alanine from L-alanine: step 1/1. In terms of biological role, catalyzes the interconversion of L-alanine and D-alanine. May also act on other amino acids. This is Alanine racemase (alr) from Listeria innocua serovar 6a (strain ATCC BAA-680 / CLIP 11262).